A 355-amino-acid polypeptide reads, in one-letter code: MKASSGKPREFRPAVLLLILGLLLRDSRGSSIQGFLADVEVHGSSRLTRTHTLRYNVRAHSLEGSEKTQLLVLIYVDEELFLKYNGDSRETEPLGCWIKGHGGNETCARETNNLLKVEEKLRGMMAEVINQKSQEEGLHTLQATLGCELLSNGSTRGFWHLGYDGQNFLTFDQKTLTWTVDGPSTQQNKMFWKTHAPRADLVKTFLDDICPAHLQRYLASLRNGLQDTGPPMVTVTCRNYPVGRVTLTCRAFNLYTREATLVWLQDGKPVQQKTFRSETILPSGDGTYQARVSIRVLPGQEPQFSCNLRHGNHSIMQTAVSGHAAEDSQDVASSATASAGSALPVVLAVALARAN.

The N-terminal stretch at 1 to 29 (MKASSGKPREFRPAVLLLILGLLLRDSRG) is a signal peptide. The tract at residues 46–137 (RLTRTHTLRY…VINQKSQEEG (92 aa)) is alpha-1. 3 disulfides stabilise this stretch: Cys96–Cys107, Cys147–Cys210, and Cys249–Cys306. N-linked (GlcNAc...) asparagine glycosylation is found at Asn104 and Asn152. Positions 138-229 (LHTLQATLGC…SLRNGLQDTG (92 aa)) are alpha-2. The interval 230-323 (PPMVTVTCRN…SIMQTAVSGH (94 aa)) is alpha-3. Residues 231–321 (PMVTVTCRNY…NHSIMQTAVS (91 aa)) enclose the Ig-like C1-type domain. The N-linked (GlcNAc...) asparagine glycan is linked to Asn312. The segment at 324-329 (AAEDSQ) is connecting peptide. Residue Asp330 is the site of GPI-anchor amidated aspartate attachment. Positions 331-355 (VASSATASAGSALPVVLAVALARAN) are cleaved as a propeptide — removed in mature form.

It belongs to the MHC class I family. Heterodimer with B2M (beta-2-microglobulin). Post-translationally, N-glycosylated. Ubiquitously expressed in neonatal and adult tissues.

It is found in the cell membrane. Functionally, binds to heparan sulfate proteoglycans on the surface of fibroblast (NIH-3T3) cells. The chain is MHC class I-like protein MILL2 from Mus musculus (Mouse).